The following is a 141-amino-acid chain: ATP synthase epsilon chain (141 aa).

The protein belongs to the ATPase epsilon chain family. F-type ATPases have 2 components, CF(1) - the catalytic core - and CF(0) - the membrane proton channel. CF(1) has five subunits: alpha(3), beta(3), gamma(1), delta(1), epsilon(1). CF(0) has three main subunits: a, b and c.

It localises to the cell inner membrane. Functionally, produces ATP from ADP in the presence of a proton gradient across the membrane. The polypeptide is ATP synthase epsilon chain (Paraburkholderia phytofirmans (strain DSM 17436 / LMG 22146 / PsJN) (Burkholderia phytofirmans)).